Here is a 477-residue protein sequence, read N- to C-terminus: Angiotensinogen (477 aa).

Residues 1 to 24 form the signal peptide; sequence MTPTGAGLKATIFCILTWVSLTAG. A disulfide bond links Cys42 and Cys161. N-linked (GlcNAc...) asparagine glycosylation is found at Asn295 and Asn319.

This sequence belongs to the serpin family. In terms of processing, in response to low blood pressure, the enzyme renin/REN cleaves angiotensinogen to produce angiotensin-1. Angiotensin-1 is a substrate of ACE (angiotensin converting enzyme) that removes a dipeptide to yield the physiologically active peptide angiotensin-2. Angiotensin-1 and angiotensin-2 can be further processed to generate angiotensin-3, angiotensin-4. Angiotensin 1-9 is cleaved from angiotensin-1 by ACE2 and can be further processed by ACE to produce angiotensin 1-7, angiotensin 1-5 and angiotensin 1-4. Angiotensin 1-7 has also been proposed to be cleaved from angiotensin-2 by ACE2 or from angiotensin-1 by MME (neprilysin). Post-translationally, the disulfide bond is labile. Angiotensinogen is present in the circulation in a near 40:60 ratio with the oxidized disulfide-bonded form, which preferentially interacts with receptor-bound renin.

The protein localises to the secreted. Its function is as follows. Essential component of the renin-angiotensin system (RAS), a potent regulator of blood pressure, body fluid and electrolyte homeostasis. Functionally, acts directly on vascular smooth muscle as a potent vasoconstrictor, affects cardiac contractility and heart rate through its action on the sympathetic nervous system, and alters renal sodium and water absorption through its ability to stimulate the zona glomerulosa cells of the adrenal cortex to synthesize and secrete aldosterone. Acts by binding to angiotensin receptors AGTR1 and AGTR2. Also binds the DEAR/FBXW7-AS1 receptor. In terms of biological role, stimulates aldosterone release. Is a ligand for the G-protein coupled receptor MAS1. Has vasodilator and antidiuretic effects. Has an antithrombotic effect that involves MAS1-mediated release of nitric oxide from platelets. The protein is Angiotensinogen (Agt) of Rattus norvegicus (Rat).